Consider the following 165-residue polypeptide: V-type proton ATPase 16 kDa proteolipid subunit (165 aa).

The Lumenal portion of the chain corresponds to M1 to T10. A helical membrane pass occupies residues A11–G33. At T34–S55 the chain is on the cytoplasmic side. Residues I56 to I76 traverse the membrane as a helical segment. The Lumenal portion of the chain corresponds to S77–H95. A helical transmembrane segment spans residues L96 to G117. The Cytoplasmic portion of the chain corresponds to D118–K129. A helical membrane pass occupies residues L130–L155. Residues S156–D165 are Lumenal-facing.

The protein belongs to the V-ATPase proteolipid subunit family. As to quaternary structure, V-ATPase is a heteromultimeric enzyme composed of a peripheral catalytic V1 complex (main components: subunits A, B, C, D, E, and F) attached to an integral membrane V0 proton pore complex (main component: the proteolipid protein; which is present as a hexamer that forms the proton-conducting pore).

Its subcellular location is the vacuole membrane. Proton-conducting pore forming subunit of the membrane integral V0 complex of vacuolar ATPase. V-ATPase is responsible for acidifying a variety of intracellular compartments in eukaryotic cells. This is V-type proton ATPase 16 kDa proteolipid subunit (VATP-P1) from Oryza sativa subsp. indica (Rice).